A 545-amino-acid polypeptide reads, in one-letter code: Cytochrome P450 10 (545 aa).

Position 493 (Cys-493) interacts with heme.

The protein belongs to the cytochrome P450 family. Heme serves as cofactor. As to expression, abundantly expressed in the female gonadotropic hormone producing dorsal bodies.

Its function is as follows. May be involved in the synthesis of the female gonadotropic hormone produced by the dorsal bodies. In Lymnaea stagnalis (Great pond snail), this protein is Cytochrome P450 10 (CYP10).